Reading from the N-terminus, the 179-residue chain is Large ribosomal subunit protein uL6 (179 aa).

Belongs to the universal ribosomal protein uL6 family. As to quaternary structure, part of the 50S ribosomal subunit.

In terms of biological role, this protein binds to the 23S rRNA, and is important in its secondary structure. It is located near the subunit interface in the base of the L7/L12 stalk, and near the tRNA binding site of the peptidyltransferase center. This Beutenbergia cavernae (strain ATCC BAA-8 / DSM 12333 / CCUG 43141 / JCM 11478 / NBRC 16432 / NCIMB 13614 / HKI 0122) protein is Large ribosomal subunit protein uL6.